The following is a 485-amino-acid chain: NADH-quinone oxidoreductase subunit N (485 aa).

14 helical membrane-spanning segments follow: residues 8–28, 35–55, 75–95, 105–125, 127–147, 159–179, 203–223, 235–255, 271–291, 297–317, 326–346, 373–393, 408–427, and 449–469; these read LIAL…MLSI, FVNA…LYFV, FYTG…YPWL, FYLL…ASHL, SLFI…GYAF, YTIL…LVYA, LLAG…LVPF, PAPV…GVLM, TVLG…AISQ, LLGY…IAVQ, VGVY…VVSL, AAVM…LGFI, WWLT…YYLR, and AFTA…VLGI.

The protein belongs to the complex I subunit 2 family. As to quaternary structure, NDH-1 is composed of 13 different subunits. Subunits NuoA, H, J, K, L, M, N constitute the membrane sector of the complex.

Its subcellular location is the cell inner membrane. The enzyme catalyses a quinone + NADH + 5 H(+)(in) = a quinol + NAD(+) + 4 H(+)(out). NDH-1 shuttles electrons from NADH, via FMN and iron-sulfur (Fe-S) centers, to quinones in the respiratory chain. The immediate electron acceptor for the enzyme in this species is believed to be ubiquinone. Couples the redox reaction to proton translocation (for every two electrons transferred, four hydrogen ions are translocated across the cytoplasmic membrane), and thus conserves the redox energy in a proton gradient. The polypeptide is NADH-quinone oxidoreductase subunit N (Erwinia tasmaniensis (strain DSM 17950 / CFBP 7177 / CIP 109463 / NCPPB 4357 / Et1/99)).